A 117-amino-acid chain; its full sequence is MKLCAVIIASLLVCVAVASSSDNQKEFAQEKEMTREETQSLGEHEKDDEVTGSEERSCIEEWKTCENDCECCGMSTLCAASWVDGHQIKLCRNVGGKLKKVLHFIQKSVSKIKSCKK.

Residues 1-20 form the signal peptide; it reads MKLCAVIIASLLVCVAVASS. A disordered region spans residues 20–55; that stretch reads SSDNQKEFAQEKEMTREETQSLGEHEKDDEVTGSEE. A propeptide spanning residues 21–56 is cleaved from the precursor; it reads SDNQKEFAQEKEMTREETQSLGEHEKDDEVTGSEER. The segment covering 23–55 has biased composition (basic and acidic residues); sequence NQKEFAQEKEMTREETQSLGEHEKDDEVTGSEE. 4 disulfide bridges follow: cysteine 58/cysteine 72, cysteine 65/cysteine 78, cysteine 69/cysteine 115, and cysteine 71/cysteine 91.

The protein belongs to the neurotoxin 03 (Tx2) family. 02 subfamily. HNTX-XV sub-subfamily. As to expression, expressed by the venom gland.

The protein localises to the secreted. Putative ion channel inhibitor. The chain is Hainantoxin-XV-2 from Cyriopagopus hainanus (Chinese bird spider).